The chain runs to 170 residues: Putative zinc finger protein 542 (170 aa).

The KRAB domain occupies 1–42 (MLENYQNLVWLGLSISKSVISLLEKRKLPWIMAKEEIRGPLP). 2 consecutive C2H2-type zinc fingers follow at residues 98–120 (NVCK…KRNH) and 126–148 (NQCL…QRIH). Residues 154-170 (YKCNECIKTFNQRAHLT) form a C2H2-type 3; degenerate zinc finger.

Belongs to the krueppel C2H2-type zinc-finger protein family.

It is found in the nucleus. In terms of biological role, may be involved in transcriptional regulation. The protein is Putative zinc finger protein 542 (ZNF542P) of Homo sapiens (Human).